We begin with the raw amino-acid sequence, 306 residues long: Transcription factor MYBS1 (306 aa).

The region spanning 18-73 is the Myb-like domain; the sequence is WTREDDKAFENALAACAAPPPADGGAPDDDWFAALAASVPGARSAEEVRRHYEALV. The Nuclear export signal 1 signature appears at 72–86; that stretch reads LVEDVAAIDAGRVPL. Residues 89–142 form a disordered region; the sequence is YAGEESAAPPDGAGAAAAASKDGGHRRDERKGGGGGYDGGKSCSKAEQERRKGI. The segment covering 92 to 109 has biased composition (low complexity); sequence EESAAPPDGAGAAAAASK. 2 stretches are compositionally biased toward basic and acidic residues: residues 110–120 and 132–142; these read DGGHRRDERKG and SKAEQERRKGI. Positions 133 to 140 match the Nuclear localization signal 1 motif; the sequence is KAEQERRK. Positions 136-192 constitute an HTH myb-type domain; it reads QERRKGIPWTEEEHRLFLLGLDKFGKGDWRSISRNFVISRTPTQVASHAQKYFIRLN. The segment at residues 164-188 is a DNA-binding region (H-T-H motif); it reads WRSISRNFVISRTPTQVASHAQKYF. Residues 196 to 200 carry the Nuclear localization signal 2 motif; it reads RDRRR. The short motif at 203–215 is the Nuclear export signal 2 element; the sequence is IHDITSVTAGDQV. The segment covering 228–241 has biased composition (low complexity); the sequence is ATGNPAAAALGPPG. The disordered stretch occupies residues 228 to 255; the sequence is ATGNPAAAALGPPGMKHHHHHHPGGAPP.

As to quaternary structure, homodimer. Interacts with GAMYB. Expressed in aboveground tissues, with the highest level in leaves.

The protein resides in the nucleus. The protein localises to the cytoplasm. Functionally, transcription activator that binds to 5'-TATCCA-3' elements in gene promoters. Derepresses strongly the sugar-repressed transcription of promoters containing SRS or 5'-TATCCA-3' elements. Functions with GAMYB to integrate diverse nutrient starvation and gibberellin (GA) signaling pathways during germination of grains. Sugar, nitrogen and phosphate starvation signals converge and interconnect with GA to promote the co-nuclear import of MYBS1 and GAMYB, resulting in the expression of a large set of GA-inducible hydrolases, transporters, and regulators that are essential for mobilization of nutrient reserves in the endosperm to support seedling growth. The chain is Transcription factor MYBS1 from Oryza sativa subsp. japonica (Rice).